Here is a 750-residue protein sequence, read N- to C-terminus: GTP pyrophosphokinase rsh (750 aa).

The region spanning 45 to 144 (YFSHPLEVAA…VKLADRLHNM (100 aa)) is the HD domain. The TGS domain maps to 390-451 (DQVFCFTPKG…KNGDEVDIIR (62 aa)). A disordered region spans residues 587–613 (AAKVDPAATTPKPGKRALPIRGTNPDL). One can recognise an ACT domain in the interval 676-750 (RISVSAINSP…SVSSAKRVNG (75 aa)).

This sequence belongs to the RelA/SpoT family.

It catalyses the reaction GTP + ATP = guanosine 3'-diphosphate 5'-triphosphate + AMP. Its function is as follows. Functions as a (p)ppGpp synthase. In eubacteria ppGpp (guanosine 3'-diphosphate 5'-diphosphate) is a mediator of the stringent response that coordinates a variety of cellular activities in response to changes in nutritional abundance. It is necessary for persistence in mice, essential for intracellular growth of Brucella and required for expression of the type IV secretion system VirB and therefore plays a role in adaptation of Brucella to its intracellular host environment. The polypeptide is GTP pyrophosphokinase rsh (rsh) (Brucella suis biovar 1 (strain 1330)).